The sequence spans 204 residues: Apoptosis regulator R11 (204 aa).

The BH1 motif lies at 101 to 120; that stretch reads ELFRDGTNWGRIVAFFSFGR. Residues 152–167 carry the BH2 motif; sequence PWMQENGGWEAFVGLY. A helical transmembrane segment spans residues 181–198; it reads RFGRLLTIVMLTGVFALV.

The protein belongs to the Bcl-2 family.

It localises to the membrane. In terms of biological role, confers strong protection against cell death. This is Apoptosis regulator R11 from Xenopus laevis (African clawed frog).